The primary structure comprises 273 residues: Shikimate dehydrogenase (NADP(+)) (273 aa).

Shikimate contacts are provided by residues 15–17 (SKS) and Thr62. Lys66 serves as the catalytic Proton acceptor. Glu78 lines the NADP(+) pocket. Shikimate contacts are provided by Asn87 and Asp103. Residues 127–131 (GAGGA), 151–156 (NRTHDK), and Met214 each bind NADP(+). Tyr216 contacts shikimate. An NADP(+)-binding site is contributed by Gly238.

This sequence belongs to the shikimate dehydrogenase family. Homodimer.

The enzyme catalyses shikimate + NADP(+) = 3-dehydroshikimate + NADPH + H(+). Its pathway is metabolic intermediate biosynthesis; chorismate biosynthesis; chorismate from D-erythrose 4-phosphate and phosphoenolpyruvate: step 4/7. Functionally, involved in the biosynthesis of the chorismate, which leads to the biosynthesis of aromatic amino acids. Catalyzes the reversible NADPH linked reduction of 3-dehydroshikimate (DHSA) to yield shikimate (SA). The polypeptide is Shikimate dehydrogenase (NADP(+)) (Shewanella denitrificans (strain OS217 / ATCC BAA-1090 / DSM 15013)).